Consider the following 437-residue polypeptide: MTEQAVRTYVLDTSVLLSDPWACTRFAEHEVVVPLVVISELEAKRHHHELGWFARQALRMFDDMRLEHGRLDQPVPVGTQGGTLHVELNHSDPSVLPAGFRNDSNDARILTVAANLAAEGKHVTLVSKDIPLRVKAGAVGLAADEYHAQDVVVSGWTGMTEMDVAGEDIDTLFADGEIDLAEARDLPCHTGIRLLGGTSHALGRVNAAKKVQLVRGDREVFGLRGRSAEQRVALDLLLDESVGIVSLGGKAGTGKSALALCAGLEAVLERRTQRKVVVFRPLYAVGGQDLGYLPGSESEKMGPWAQAVFDTLEGLASPAVLDEVLSRGMLEVLPLTHIRGRSLHDSFVIVDEAQSLERNVLLTVLSRLGAGSRVVLTHDVAQRDNLRVGRHDGVAAVIEKLKGHPLFAHVTLQRSERSPIAALVTEMLEEISPGALP.

A PINc domain is found at 7–134 (RTYVLDTSVL…LVSKDIPLRV (128 aa)).

The protein in the N-terminal section; belongs to the PINc/VapC protein family. It in the C-terminal section; belongs to the PhoH family. Interacts with antitoxin PhoAT. Requires Mg(2+) as cofactor.

It carries out the reaction n ATP + n H2O + wound RNA = n ADP + n phosphate + unwound RNA.. It catalyses the reaction ATP + H2O = ADP + phosphate + H(+). The enzyme catalyses GTP + H2O = GDP + phosphate + H(+). Toxic component of a type II toxin-antitoxin (TA) system. The possible cognate antitoxin is PhoAT; the toxin gene can be expressed in the absence of the antitoxin gene in an endogenous mc(2)155 double deletion. Unwinds and/or cleaves 5'-tailed RNA in vitro that starts with 5'-AC, the reaction requires hydrolyzable ATP; double-stranded (ds)RNA and dsDNA are not unwound or cleaved. Has ATPase and GTPase activities. The sequence is that of Protein PhoH2 from Mycolicibacterium smegmatis (strain ATCC 700084 / mc(2)155) (Mycobacterium smegmatis).